Here is a 314-residue protein sequence, read N- to C-terminus: Olfactory receptor 1Q1 (314 aa).

Over 1–25 (MDNSNWTSVSHFVLLGISTHPEEQI) the chain is Extracellular. N-linked (GlcNAc...) asparagine glycosylation is present at asparagine 5. Residues 26–49 (PLFLVFSLMYAINISGNLAIITLI) form a helical membrane-spanning segment. The Cytoplasmic portion of the chain corresponds to 50–57 (LSAPRLHI). Residues 58–79 (PMYIFLSNLALTDICFTSTTVP) traverse the membrane as a helical segment. Topologically, residues 80 to 100 (KMLQIIFSPTKVISYTGCLAQ) are extracellular. Cysteine 97 and cysteine 189 form a disulfide bridge. A helical transmembrane segment spans residues 101–120 (TYFFICFAVMENFILAVMAY). Over 121-139 (DRYIAICHPFHYTMILTRM) the chain is Cytoplasmic. Residues 140 to 158 (LCVKMVVMCHALSHLHAML) traverse the membrane as a helical segment. Residues 159–195 (HTFLIGQLIFCADNRIPHFFCDLYALMKISCTSTYLN) lie on the Extracellular side of the membrane. A helical transmembrane segment spans residues 196–219 (TLMIHTEGAVVISGALAFITASYA). Residues 220–236 (CIILVVLRIPSAKGRWK) lie on the Cytoplasmic side of the membrane. Residues 237 to 259 (TFSTCGSHLTVVAIFYGTLSWVY) form a helical membrane-spanning segment. Over 260 to 272 (FRPLSSYSVTKGR) the chain is Extracellular. Residues 273-292 (IITVVYTVVTPMLNPFIYSL) traverse the membrane as a helical segment. The Cytoplasmic segment spans residues 293 to 314 (RNGDVKGGFMKWMSRMQTFFFR).

This sequence belongs to the G-protein coupled receptor 1 family.

It localises to the cell membrane. Odorant receptor. This Homo sapiens (Human) protein is Olfactory receptor 1Q1 (OR1Q1).